Here is a 245-residue protein sequence, read N- to C-terminus: tRNA (guanine-N(1)-)-methyltransferase (245 aa).

S-adenosyl-L-methionine-binding positions include Gly-114 and 133-138 (LGDFVI).

The protein belongs to the RNA methyltransferase TrmD family. In terms of assembly, homodimer.

Its subcellular location is the cytoplasm. The catalysed reaction is guanosine(37) in tRNA + S-adenosyl-L-methionine = N(1)-methylguanosine(37) in tRNA + S-adenosyl-L-homocysteine + H(+). Its function is as follows. Specifically methylates guanosine-37 in various tRNAs. This Pediococcus pentosaceus (strain ATCC 25745 / CCUG 21536 / LMG 10740 / 183-1w) protein is tRNA (guanine-N(1)-)-methyltransferase.